The chain runs to 864 residues: Leucine--tRNA ligase (864 aa).

The short motif at 42–52 is the 'HIGH' region element; it reads PYPSGRLHMGH. A 'KMSKS' region motif is present at residues 621–625; sequence KMSKS. Residue Lys624 participates in ATP binding.

It belongs to the class-I aminoacyl-tRNA synthetase family.

The protein localises to the cytoplasm. The enzyme catalyses tRNA(Leu) + L-leucine + ATP = L-leucyl-tRNA(Leu) + AMP + diphosphate. The sequence is that of Leucine--tRNA ligase from Alkalilimnicola ehrlichii (strain ATCC BAA-1101 / DSM 17681 / MLHE-1).